The chain runs to 281 residues: Lectin CaBo (281 aa).

Positions 1-29 (MAISKKSSLYLPIFTFITMLLMVVNKVSS) are cleaved as a signal peptide. A Ca(2+)-binding site is contributed by Asp-119. Position 139 (Arg-139) interacts with a carbohydrate. A propeptide spans 149–163 (IIKNSTTIDFNAAYN) (removed in mature form). Glu-171 and Asp-173 together coordinate Mn(2+). Residues Asp-173, Tyr-175, Asn-177, and Asp-182 each coordinate Ca(2+). Residue Tyr-175 coordinates a carbohydrate. Positions 182 and 187 each coordinate Mn(2+). 262 to 263 (LY) contributes to the a carbohydrate binding site.

Belongs to the leguminous lectin family. In terms of assembly, equilibrium between homodimer and homotetramer. In terms of processing, the mature chain consists of residues 164-281 followed by residues 30-148. Concanavalin A-like lectins of the Diocleinae subtribe undergo proteolytic processing referred to as circular permutation. The propeptide is split into an N-terminal and a C-terminal part, the gamma and beta chain, respectively. These are then religated in beta-gamma order to form the mature alpha chain. The beta and gamma chains can often be detected in cell extracts.

Its function is as follows. D-mannose-specific lectin. The sequence is that of Lectin CaBo from Canavalia bonariensis.